The chain runs to 595 residues: Actin-histidine N-methyltransferase (595 aa).

Residues 1–22 (MGKKSRVKTQKSGTGATATVSP) are disordered. Positions 10 to 20 (QKSGTGATATV) are enriched in polar residues. S-adenosyl-L-methionine is bound by residues Arg-75, 104-106 (EGF), Arg-254, 275-279 (DMCNH), and 325-327 (SGF). Residues 94–314 (EGFEMVNFKE…AGEQIYIFYG (221 aa)) enclose the SET domain. Residue Ser-513 is modified to Phosphoserine. A disordered region spans residues 552–595 (LVNGENCIPNGTRSENEDLNQEENKRAVEDAKGSSSDSTDAVKK). The segment covering 573–583 (EENKRAVEDAK) has biased composition (basic and acidic residues). Polar residues predominate over residues 584–595 (GSSSDSTDAVKK).

The protein belongs to the class V-like SAM-binding methyltransferase superfamily. SETD3 actin-histidine methyltransferase family. In terms of assembly, interacts with MYOD1. In terms of processing, phosphorylated by GSK3B, which is required for recognition by the SCF(FBXW7) complex and subsequent degradation. Post-translationally, ubiquitinated by the SCF(FBXW7) complex following phosphorylation by GSK3B, leading to its degradation by the proteasome.

It is found in the cytoplasm. Its subcellular location is the nucleus. It catalyses the reaction L-histidyl-[protein] + S-adenosyl-L-methionine = N(tele)-methyl-L-histidyl-[protein] + S-adenosyl-L-homocysteine + H(+). Protein-histidine N-methyltransferase that specifically mediates 3-methylhistidine (tele-methylhistidine) methylation of actin at 'His-73'. Histidine methylation of actin is required for smooth muscle contraction of the laboring uterus during delivery. Does not have protein-lysine N-methyltransferase activity and probably only catalyzes histidine methylation of actin. In Otolemur garnettii (Small-eared galago), this protein is Actin-histidine N-methyltransferase.